A 796-amino-acid chain; its full sequence is Nuclear GTPase SLIP-GC (796 aa).

The segment covering 1–22 has biased composition (basic and acidic residues); it reads MAETKDVFGQEPHPVEDDLYKE. Residues 1 to 35 form a disordered region; sequence MAETKDVFGQEPHPVEDDLYKERTRKRRKSDRDQR. Residue 107 to 114 participates in GTP binding; the sequence is GSTGAGKS. Coiled-coil stretches lie at residues 158 to 185 and 745 to 775; these read SDQE…EEAD and KELA…RLRK.

Expressed in germinal center B-cell and in lymphomas derived from germinal center B-cell.

Its subcellular location is the nucleus speckle. In terms of biological role, nuclear GTPase found in germinal center B-cells, where it may inhibit function of the activation-induced cytidine deaminase AICDA. Reduces somatic hypermutation in B-cells which may enhance genome stability. The sequence is that of Nuclear GTPase SLIP-GC (NUGGC) from Homo sapiens (Human).